We begin with the raw amino-acid sequence, 706 residues long: SPX domain-containing membrane protein Os09g0521800 (706 aa).

Positions 2 to 145 (VNFSNKLTKD…GYKFTDYYVR (144 aa)) constitute an SPX domain. 6 helical membrane-spanning segments follow: residues 251-271 (MSLVLNLANTFLYMVNTYIVV), 281-301 (LGAAATACGAVIGSMAVAQVF), 318-338 (LLFSSVVLLLGNVMYAMAFDL), 340-359 (SLTILLLGRVLCGMGSARAV), 378-398 (AAFVSASALGMACGPALAGLL), and 414-434 (LPGWIMAFGWLVYLIWLWILF). The tract at residues 475-498 (SEQDEEDDNGDEEHNETLSSSTTT) is disordered. A compositionally biased stretch (acidic residues) spans 476–488 (EQDEEDDNGDEEH). The next 5 helical transmembrane spans lie at 520–540 (LLIYFMLKYAMEILLAESSVV), 554–574 (VFLAVLGLSVLPVNAIVGTYI), 583–603 (ILVASEMALLAGVMLSFKLTV), 611–631 (VCSAVLTFVSAEVVEGVNLSL), and 678–698 (LLNATLLPALLVCVASIAATL).

This sequence belongs to the major facilitator superfamily.

The protein localises to the membrane. The chain is SPX domain-containing membrane protein Os09g0521800 from Oryza sativa subsp. japonica (Rice).